Reading from the N-terminus, the 223-residue chain is SCMKAAPMKEVSIRGQGSLAYPGLRTQGNLETLGGPNDATRGLTSLADTFEHVIEELLDEQQAIQPSKENKDADLYSTRVMLSSQVPLEPPLLFLLEEYKNYLDAANMSMRVRRHSDPARRGELSVCDSTSEWVTAAEKKTAVDMSGATVTVLEKVPVPKGQLKQYFYETKCSSKGYAKEGCRGIDKRYWNSQCRTTQSFVRALTMDNKKRVGWRFIRIDTSC.

An N-terminal signal peptide occupies residues 1-5 (SCMKA). Positions 6-114 (APMKEVSIRG…AANMSMRVRR (109 aa)) are excised as a propeptide. N107 is a glycosylation site (N-linked (GlcNAc...) asparagine). 2 cysteine pairs are disulfide-bonded: C127-C194 and C172-C223.

The protein belongs to the NGF-beta family.

Its subcellular location is the secreted. Its function is as follows. Promotes the survival of neuronal populations that are all located either in the central nervous system or directly connected to it. This chain is Neurotrophic factor BDNF precursor form (BDNF), found in Eryx colubrinus colubrinus.